A 106-amino-acid polypeptide reads, in one-letter code: PAT complex subunit Asterix (106 aa).

Positions 1–29 (MSTNNMSDPRRPNKVLRYKPPPSECNPAL) are disordered. Serine 2 carries the post-translational modification N-acetylserine. At 2–32 (STNNMSDPRRPNKVLRYKPPPSECNPALDDP) the chain is on the cytoplasmic side. A helical membrane pass occupies residues 33–51 (TPDYMNLLGMIFSMCGLML). Position 52 (lysine 52) is a topological domain, lumenal. A helical transmembrane segment spans residues 53-70 (LKWCAWVAVYCSFISFAN). Over 71 to 74 (SRSS) the chain is Cytoplasmic. A helical membrane pass occupies residues 75–95 (EDTKQMMSSFMLSISAVVMSY). Residues 96–106 (LQNPQPMTPPW) lie on the Lumenal side of the membrane.

This sequence belongs to the Asterix family. As to quaternary structure, component of the PAT complex, composed of WDR83OS/Asterix and CCDC47. The PAT complex is part of the multi-pass translocon (MPT) complex, composed of three subcomplexes, the GEL complex (composed of RAB5IF/OPTI and TMCO1), the BOS complex (composed of NCLN/Nicalin, NOMO1 and TMEM147) and the PAT complex (composed of WDR83OS/Asterix and CCDC47). The MPT complex associates with the SEC61 complex.

It is found in the endoplasmic reticulum membrane. Component of the multi-pass translocon (MPT) complex that mediates insertion of multi-pass membrane proteins into the lipid bilayer of membranes. The MPT complex takes over after the SEC61 complex: following membrane insertion of the first few transmembrane segments of proteins by the SEC61 complex, the MPT complex occludes the lateral gate of the SEC61 complex to promote insertion of subsequent transmembrane regions. Within the MPT complex, the PAT subcomplex sequesters any highly polar regions in the transmembrane domains away from the non-polar membrane environment until they can be buried in the interior of the fully assembled protein. Within the PAT subcomplex, WDR83OS/Asterix binds to and redirects the substrate to a location behind the SEC61 complex. In Canis lupus familiaris (Dog), this protein is PAT complex subunit Asterix (WDR83OS).